A 704-amino-acid polypeptide reads, in one-letter code: Meprin A subunit beta (704 aa).

The N-terminal stretch at 1-20 (MDARHWPWFLVFATFLLVSG) is a signal peptide. A propeptide spanning residues 21 to 64 (LPAPEKFVKDIDGGIDQDIFDINEDLGLDLFEGDIKLEASGRNS) is cleaved from the precursor. The Extracellular segment spans residues 21–654 (LPAPEKFVKD…RCEKRGSTKD (634 aa)). The 195-residue stretch at 63–257 (NSIIGDNYRW…LKLNQLYSCT (195 aa)) folds into the Peptidase M12A domain. 3 disulfides stabilise this stretch: Cys104–Cys256, Cys125–Cys145, and Cys266–Cys428. His153 lines the Zn(2+) pocket. Glu154 is a catalytic residue. Zn(2+) contacts are provided by His157 and His163. 8 N-linked (GlcNAc...) asparagine glycosylation sites follow: Asn193, Asn219, Asn316, Asn422, Asn437, Asn528, Asn547, and Asn592. The MAM domain maps to 261-430 (SFMDSCDFEL…INLSETRCPH (170 aa)). Positions 431 to 585 (HIWHIQNFTQ…GDDVYILLTV (155 aa)) constitute an MATH domain. One can recognise an EGF-like domain in the interval 607–647 (VHNACSEVECQNGGICTLQEGRAECKCPAGEDWWYMGKRCE). Cystine bridges form between Cys611–Cys622, Cys616–Cys631, and Cys633–Cys646. The helical transmembrane segment at 655–678 (TIVIAVSSTVTVFAVMLIITLISV) threads the bilayer. Topologically, residues 679 to 704 (YCTRRKYRKKASAKTAAMNLENQHAF) are cytoplasmic. Phosphothreonine is present on Thr693.

As to quaternary structure, homotetramer consisting of disulfide-linked beta subunits, or heterotetramer of two alpha and two beta subunits formed by non-covalent association of two disulfide-linked heterodimers. Interacts with MBL2 through its carbohydrate moiety. This interaction may inhibit its catalytic activity. Interacts with TSPAN8. Zn(2+) serves as cofactor. Post-translationally, N-glycosylated; contains high mannose and/or complex biantennary structures. In terms of processing, proteolytically activated by trypsin in the intestinal lumen and kallikrein-related peptidases in other tissues. Phosphorylated by PKC at multiple sites of its cytoplasmic part. Phosphorylation dcreases activity at the cell surface, leading to diminished substrate cleavage. As to expression, kidney, intestinal brush borders and salivary ducts.

It localises to the cell membrane. The protein localises to the secreted. It catalyses the reaction Hydrolysis of proteins, including azocasein, and peptides. Hydrolysis of 5-His-|-Leu-6, 6-Leu-|-Cys-7, 14-Ala-|-Leu-15 and 19-Cys-|-Gly-20 bonds in insulin B chain.. Its activity is regulated as follows. Strongly inhibited by fetuin-A/AHSG. Membrane metallopeptidase that sheds many membrane-bound proteins. Exhibits a strong preference for acidic amino acids at the P1' position. Known substrates include: FGF19, VGFA, IL1B, IL18, procollagen I and III, E-cadherin, KLK7, gastrin, ADAM10, tenascin-C. The presence of several pro-inflammatory cytokine among substrates implicate MEP1B in inflammation. It is also involved in tissue remodeling due to its capability to degrade extracellular matrix components. The sequence is that of Meprin A subunit beta (Mep1b) from Rattus norvegicus (Rat).